Reading from the N-terminus, the 256-residue chain is Pimeloyl-[acyl-carrier protein] methyl ester esterase (256 aa).

The region spanning 15–242 (HLVLLHGWGL…AAHAPFISHP (228 aa)) is the AB hydrolase-1 domain. Residues W22, 82–83 (SL), and 143–147 (FLALQ) contribute to the substrate site. Catalysis depends on S82, which acts as the Nucleophile. Active-site residues include D207 and H235. A substrate-binding site is contributed by H235.

Belongs to the AB hydrolase superfamily. Carboxylesterase BioH family. As to quaternary structure, monomer.

Its subcellular location is the cytoplasm. It catalyses the reaction 6-carboxyhexanoyl-[ACP] methyl ester + H2O = 6-carboxyhexanoyl-[ACP] + methanol + H(+). Its pathway is cofactor biosynthesis; biotin biosynthesis. The physiological role of BioH is to remove the methyl group introduced by BioC when the pimeloyl moiety is complete. It allows to synthesize pimeloyl-ACP via the fatty acid synthetic pathway through the hydrolysis of the ester bonds of pimeloyl-ACP esters. This chain is Pimeloyl-[acyl-carrier protein] methyl ester esterase, found in Escherichia coli O127:H6 (strain E2348/69 / EPEC).